A 177-amino-acid polypeptide reads, in one-letter code: tRNA (cytidine(56)-2'-O)-methyltransferase (177 aa).

S-adenosyl-L-methionine is bound by residues leucine 84 and 109 to 113 (GAEKV).

This sequence belongs to the aTrm56 family. In terms of assembly, homodimer.

The protein localises to the cytoplasm. The catalysed reaction is cytidine(56) in tRNA + S-adenosyl-L-methionine = 2'-O-methylcytidine(56) in tRNA + S-adenosyl-L-homocysteine + H(+). Functionally, specifically catalyzes the AdoMet-dependent 2'-O-ribose methylation of cytidine at position 56 in tRNAs. This is tRNA (cytidine(56)-2'-O)-methyltransferase from Methanosarcina mazei (strain ATCC BAA-159 / DSM 3647 / Goe1 / Go1 / JCM 11833 / OCM 88) (Methanosarcina frisia).